A 319-amino-acid polypeptide reads, in one-letter code: Methionyl-tRNA formyltransferase (319 aa).

116–119 (SLLP) contacts (6S)-5,6,7,8-tetrahydrofolate.

This sequence belongs to the Fmt family.

It carries out the reaction L-methionyl-tRNA(fMet) + (6R)-10-formyltetrahydrofolate = N-formyl-L-methionyl-tRNA(fMet) + (6S)-5,6,7,8-tetrahydrofolate + H(+). Attaches a formyl group to the free amino group of methionyl-tRNA(fMet). The formyl group appears to play a dual role in the initiator identity of N-formylmethionyl-tRNA by promoting its recognition by IF2 and preventing the misappropriation of this tRNA by the elongation apparatus. The protein is Methionyl-tRNA formyltransferase of Chlorobium phaeovibrioides (strain DSM 265 / 1930) (Prosthecochloris vibrioformis (strain DSM 265)).